The sequence spans 180 residues: Lysine-specific demethylase 5C (180 aa).

Residues 116–159 (PEESLAYSSDAGEGAGHIPKVQGLLENGDSVTSPEKVATEEGSG) are disordered. Position 148 is a phosphoserine (S148).

Belongs to the JARID1 histone demethylase family. In terms of assembly, part of two distinct complexes, one containing E2F6, and the other containing REST. Interacts with ZMYND8. Fe(2+) is required as a cofactor.

It localises to the nucleus. It catalyses the reaction N(6),N(6),N(6)-trimethyl-L-lysyl(4)-[histone H3] + 3 2-oxoglutarate + 3 O2 = L-lysyl(4)-[histone H3] + 3 formaldehyde + 3 succinate + 3 CO2. Functionally, histone demethylase that specifically demethylates 'Lys-4' of histone H3, thereby playing a central role in histone code. Does not demethylate histone H3 'Lys-9', H3 'Lys-27', H3 'Lys-36', H3 'Lys-79' or H4 'Lys-20'. Demethylates trimethylated and dimethylated but not monomethylated H3 'Lys-4'. Participates in transcriptional repression of neuronal genes by recruiting histone deacetylases and REST at neuron-restrictive silencer elements. Represses the CLOCK-BMAL1 heterodimer-mediated transcriptional activation of the core clock component PER2. The chain is Lysine-specific demethylase 5C (KDM5C) from Cricetulus griseus (Chinese hamster).